The chain runs to 62 residues: Alpha-conotoxin ViIA (62 aa).

The N-terminal stretch at 1–18 (MGMRMMFVVFLLVVFASS) is a signal peptide. Positions 19 to 45 (VTLDRASYGRYASPVDRASALIAQAIL) are excised as a propeptide. Disulfide bonds link cysteine 48–cysteine 54 and cysteine 49–cysteine 61.

The protein belongs to the conotoxin A superfamily. The toxin is inactive on the alpha-3-beta-2 nAChR when the disulfide bond connectivity is C1-C4 and C2-C3 (ViIA-I) (IC(50)&gt;10000 nM). In terms of tissue distribution, expressed by the venom duct.

Its subcellular location is the secreted. Functionally, alpha-conotoxins act on postsynaptic membranes, they bind to the nicotinic acetylcholine receptors (nAChR) and thus inhibit them. This toxin selectively inhibits nicotinic acetylcholine receptor (nAChR) alpha-3-beta-2 subtype (IC(50)=845.5 nM). This is Alpha-conotoxin ViIA from Conus virgo (Virgin cone).